The sequence spans 1416 residues: MSSTKSGSSKYSSGSSISLIMGFSRSLEKGSFGVLYAMIKGNTFPRILTILSMLIEFCQLSSFGFKHQYPWGGDAGYYLKRIMSPVSHPSDVFGYLGFTILFWIAVGLLILGFLNIWYVAYQFYRGKIANIWIIRTLRWFVSFSVAVLFIPIISLLLIGLDCEGSSEGTILRKFDNETIQCFRGANLPIAVISIILIVVFSIVAFTSSATYYEYDTNVKSRFSKPHARFDVTVLFAKFVFAFFNSLVDFVPWLTSITFFVFMVILTFGSIIVLPYNNQRLNQVRSGFYTVVLWVSFMTLVTMGINDETSPATCYITIVGVFFAFPIGFFSNMFYFKWLSSKVSDIQILNQSPSMDLKDANKKGKRNSVEKESSPTSKVTWGKQPITLGSKRQIIFPFFKKKFVMSFFVEIMARSILNNNNEGVSSSSNESIERANNLYQCGLQYFPNSDLLWMAYCNFLFTVRKDRHIGYAALEKLRRMKPSFDVRFFIYQRDKEREQIMDSDLRGPEHTGKIQDFVSYMEFKKLYYGAKRHHVKCLNYIKRFWGHLLHETVDLHRLSDLSGRIATTENKANESYERLLALNPNSVRVLRDYSQFLEEVVKDKESSYKLQKKAEAIEDIMSKSQTTDFKISDIKAIDSDEDDIEKTLQEPTAIQLAKIDADIEKSGSKSGSSKSKDDSSESSSSSKGRRGKYKEFQQSNAINKLSWLMIGTTCCCIIFLIVVLVVFRGLEVKHTNAYQGIISITDCANEAVQMGMHLNAMQAYALVAGVGNNTVEASLIEIARRRALVKRGIIIMKNIHDAIYWGEGNPVSYVGDNLSQLKARDGYDIFDIGSVIFTFDQFNRSSTLLDNKQMIELYSQPSVNMSVLVAPPGSNTTSLYTQTYNAWKAGNAFIESAMLASDVTFDELRYSVNQNPNFKFVTINAPVIMPDIYNKVQTAYIDSLVSDITGTLDAILYTWCGIFAVLFLICAVLFRPIVRKISREKIRTLVLFSLAPKDVVVKLSTKKIKMVSLDSGSERDNLFDTTDDDGRDDHLGEDDNNIQTPVGDNNNNNNNNNNNNNNNGSISSNVTKSDGEIGSDGVRSSSGSNVLNTSSPYRDRRPLMDSTSVLASTATLNNRNVRLQAKDEEITNGGGERKGSDATRTALSEDKKYGWDGKSKRNLNKKSLKSILGRLHWSYILATFLLFGFITMGIWVTFTVVFNNSQSGYTLGKSCSRSLNSRVINYYVAELYTYSQYVSTQNMVDAITELQSSHQSLPYLEEVRPLMEGSYGCWALNKSTCLPPSSMYYEEVNSGLDRVVDSLAKKAINLAYTDQAALLDSPDLQWFLALIDYIFIGLDTATFTYFDYFLEKQEWANTVLTAILSVSCVILLVVHVVLFRPFMNHLRIQHIHTLALLRLAPDDIRYMEVSDKVIDED.

8 consecutive transmembrane segments (helical) span residues 47-67 (ILTI…GFKH), 93-113 (FGYL…ILGF), 140-160 (FVSF…LIGL), 185-205 (ANLP…IVAF), 231-251 (VTVL…DFVP), 253-273 (LTSI…IIVL), 285-305 (SGFY…MGIN), and 315-335 (ITIV…MFYF). Basic and acidic residues predominate over residues 356–372 (LKDANKKGKRNSVEKES). Disordered regions lie at residues 356–377 (LKDA…PTSK) and 662–691 (IEKS…RRGK). 2 helical membrane-spanning segments follow: residues 706 to 726 (WLMI…LVVF) and 953 to 973 (AILY…AVLF). 2 disordered regions span residues 1018–1103 (RDNL…RPLM) and 1119–1144 (NVRL…ATRT). The span at 1024–1039 (TTDDDGRDDHLGEDDN) shows a compositional bias: acidic residues. Low complexity-rich tracts occupy residues 1048 to 1062 (NNNN…NNNN) and 1083 to 1094 (SSSGSNVLNTSS). The segment covering 1123 to 1144 (QAKDEEITNGGGERKGSDATRT) has biased composition (basic and acidic residues). 3 consecutive transmembrane segments (helical) span residues 1179-1199 (ILAT…TFTV), 1325-1345 (WFLA…FTYF), and 1358-1378 (VLTA…VVLF).

It localises to the membrane. In terms of biological role, regulator of the cAMP signaling pathway specific to sexual development. Controls the levels of external cAMP by regulating the expression of phosphodiesterase pdsA and its inhibitor pdiA. In Dictyostelium discoideum (Social amoeba), this protein is Tiny macrocysts protein B (tmcB).